The primary structure comprises 543 residues: Glutamyl-tRNA(Gln) amidotransferase subunit B-1, chloroplastic/mitochondrial (543 aa).

The segment at 1 to 47 (MIRAGGPSPSPRGRRAGPIRLPRRAPSSTPTRAKTEEKASADASSRT) is disordered. Positions 12 to 23 (RGRRAGPIRLPR) are enriched in basic residues.

The protein belongs to the GatB/GatE family. GatB subfamily. Subunit of the heterotrimeric GatCAB amidotransferase (AdT) complex, composed of A, B and C subunits.

Its subcellular location is the mitochondrion. It is found in the plastid. It localises to the chloroplast. The enzyme catalyses L-glutamyl-tRNA(Gln) + L-glutamine + ATP + H2O = L-glutaminyl-tRNA(Gln) + L-glutamate + ADP + phosphate + H(+). In terms of biological role, allows the formation of correctly charged Gln-tRNA(Gln) through the transamidation of misacylated Glu-tRNA(Gln) in chloroplasts and mitochondria. The reaction takes place in the presence of glutamine and ATP through an activated gamma-phospho-Glu-tRNA(Gln). The sequence is that of Glutamyl-tRNA(Gln) amidotransferase subunit B-1, chloroplastic/mitochondrial from Micromonas commoda (strain RCC299 / NOUM17 / CCMP2709) (Picoplanktonic green alga).